The primary structure comprises 1105 residues: Lysylphosphatidylglycerol biosynthesis bifunctional protein LysX (1105 aa).

The tract at residues 1–603 (MTVTKPRSVQ…LLHHDGSAPD (603 aa)) is phosphatidylglycerol lysyltransferase. Transmembrane regions (helical) follow at residues 20-40 (VPAA…LASI), 62-82 (FPDT…ALAA), 86-106 (IAWL…AADI), 117-137 (FGEN…VLGY), 154-174 (AVLV…VDLF), 186-203 (YVAN…DLFT), and 208-228 (VFLN…ATIV). The lysine--tRNA ligase stretch occupies residues 604–1105 (VSGLRQSAIA…TLPFPLAKPH (502 aa)). Mg(2+) contacts are provided by Asp-1017 and Glu-1024.

This sequence in the N-terminal section; belongs to the LPG synthetase family. In the C-terminal section; belongs to the class-II aminoacyl-tRNA synthetase family. Mg(2+) is required as a cofactor.

Its subcellular location is the cell membrane. The catalysed reaction is tRNA(Lys) + L-lysine + ATP = L-lysyl-tRNA(Lys) + AMP + diphosphate. It catalyses the reaction L-lysyl-tRNA(Lys) + a 1,2-diacyl-sn-glycero-3-phospho-(1'-sn-glycerol) = a 1,2-diacyl-sn-glycero-3-phospho-1'-(3'-O-L-lysyl)-sn-glycerol + tRNA(Lys). Catalyzes the production of L-lysyl-tRNA(Lys)transfer and the transfer of a lysyl group from L-lysyl-tRNA(Lys) to membrane-bound phosphatidylglycerol (PG), which produces lysylphosphatidylglycerol (LPG), one of the components of the bacterial membrane with a positive net charge. LPG synthesis contributes to the resistance to cationic antimicrobial peptides (CAMPs) and likely protects M.tuberculosis against the CAMPs produced by competiting microorganisms (bacteriocins). In fact, the modification of anionic phosphatidylglycerol with positively charged L-lysine results in repulsion of the peptides. This chain is Lysylphosphatidylglycerol biosynthesis bifunctional protein LysX (lysX), found in Mycobacterium ulcerans (strain Agy99).